A 263-amino-acid chain; its full sequence is UPF0328 protein ECU08_2060 (263 aa).

The protein belongs to the UPF0328 family.

This chain is UPF0328 protein ECU08_2060, found in Encephalitozoon cuniculi (strain GB-M1) (Microsporidian parasite).